The sequence spans 579 residues: Keratinocyte proline-rich protein (579 aa).

A Phosphoserine modification is found at Ser394. A disordered region spans residues Glu526–Phe579. Over residues Phe551 to Gly561 the composition is skewed to basic and acidic residues.

In terms of tissue distribution, expressed in the upper layer of epidermis and psoriasis (at protein level). Expressed in the upper layer of epidermis and psoriasis.

The protein resides in the cytoplasm. This chain is Keratinocyte proline-rich protein (KPRP), found in Homo sapiens (Human).